Reading from the N-terminus, the 82-residue chain is RNA-binding protein Hfq (82 aa).

The 61-residue stretch at 10 to 70 folds into the Sm domain; sequence DIFLNGARKN…LSTITPSKAI (61 aa).

The protein belongs to the Hfq family. In terms of assembly, homohexamer.

In terms of biological role, RNA chaperone that binds small regulatory RNA (sRNAs) and mRNAs to facilitate mRNA translational regulation in response to envelope stress, environmental stress and changes in metabolite concentrations. Also binds with high specificity to tRNAs. The sequence is that of RNA-binding protein Hfq from Clostridium kluyveri (strain NBRC 12016).